We begin with the raw amino-acid sequence, 343 residues long: Arginine-hydroxylase NDUFAF5, mitochondrial (343 aa).

A mitochondrion-targeting transit peptide spans 1-29; sequence MLRKVVLLRLCPLLGRPAVSASSGSRREV.

Belongs to the methyltransferase superfamily. As to quaternary structure, interacts with NDUFAF8, leading to stabilize NDUFAF5. Interacts with NDUFS7. Interacts with PYURF (via TRM112 domain); the interaction is direct and stabilizes NDUFAF5 protein.

It localises to the mitochondrion inner membrane. In terms of biological role, arginine hydroxylase that mediates hydroxylation of 'Arg-122' of NDUFS7 and is involved in the assembly of mitochondrial NADH:ubiquinone oxidoreductase complex (complex I, MT-ND1) at early stages. May also have methyltransferase activity. In Mus musculus (Mouse), this protein is Arginine-hydroxylase NDUFAF5, mitochondrial.